We begin with the raw amino-acid sequence, 423 residues long: 26S proteasome regulatory subunit 6A homolog B (423 aa).

A Phosphoserine modification is found at S18. 211–218 contacts ATP; that stretch reads GPPGTGKT. Glycyl lysine isopeptide (Lys-Gly) (interchain with G-Cter in ubiquitin) cross-links involve residues K234, K278, and K415.

It belongs to the AAA ATPase family. In terms of assembly, component of the 19S regulatory particle (RP/PA700) base subcomplex of the 26S proteasome. The 26S proteasome is composed of a core protease (CP), known as the 20S proteasome, capped at one or both ends by the 19S regulatory particle (RP/PA700). The RP/PA700 complex is composed of at least 17 different subunits in two subcomplexes, the base and the lid, which form the portions proximal and distal to the 20S proteolytic core, respectively.

The protein localises to the cytoplasm. Its subcellular location is the nucleus. Its function is as follows. The 26S proteasome is involved in the ATP-dependent degradation of ubiquitinated proteins. The regulatory (or ATPase) complex confers ATP dependency and substrate specificity to the 26S complex. The polypeptide is 26S proteasome regulatory subunit 6A homolog B (RPT5B) (Arabidopsis thaliana (Mouse-ear cress)).